We begin with the raw amino-acid sequence, 376 residues long: Alpha-centractin (376 aa).

Position 1 is an N-acetylmethionine (Met1).

Belongs to the actin family. ARP1 subfamily. Part of the ACTR1A/ACTB filament around which the dynactin complex is built. The filament contains 8 copies of ACTR1A and 1 ACTB. Interacts with dynein and adapters such as BICD2. Interacts with BCCIP (isoform 2/alpha).

It localises to the cytoplasm. It is found in the cytoskeleton. Its subcellular location is the microtubule organizing center. The protein resides in the centrosome. The protein localises to the cell cortex. In terms of biological role, part of the ACTR1A/ACTB filament around which the dynactin complex is built. The dynactin multiprotein complex activates the molecular motor dynein for ultra-processive transport along microtubules. This Canis lupus familiaris (Dog) protein is Alpha-centractin (ACTR1A).